Reading from the N-terminus, the 490-residue chain is UDP-N-acetylmuramate--L-alanine ligase (490 aa).

126-132 (GTHGKTT) is a binding site for ATP.

It belongs to the MurCDEF family.

It localises to the cytoplasm. The catalysed reaction is UDP-N-acetyl-alpha-D-muramate + L-alanine + ATP = UDP-N-acetyl-alpha-D-muramoyl-L-alanine + ADP + phosphate + H(+). Its pathway is cell wall biogenesis; peptidoglycan biosynthesis. Its function is as follows. Cell wall formation. This Baumannia cicadellinicola subsp. Homalodisca coagulata protein is UDP-N-acetylmuramate--L-alanine ligase.